The primary structure comprises 607 residues: Elongation factor 4 (607 aa).

The region spanning 11–193 is the tr-type G domain; that stretch reads EKIRNFSIIA…QIVEKVPAPT (183 aa). Residues 23 to 28 and 140 to 143 contribute to the GTP site; these read DHGKST and NKID.

It belongs to the TRAFAC class translation factor GTPase superfamily. Classic translation factor GTPase family. LepA subfamily.

It localises to the cell membrane. The enzyme catalyses GTP + H2O = GDP + phosphate + H(+). Functionally, required for accurate and efficient protein synthesis under certain stress conditions. May act as a fidelity factor of the translation reaction, by catalyzing a one-codon backward translocation of tRNAs on improperly translocated ribosomes. Back-translocation proceeds from a post-translocation (POST) complex to a pre-translocation (PRE) complex, thus giving elongation factor G a second chance to translocate the tRNAs correctly. Binds to ribosomes in a GTP-dependent manner. The chain is Elongation factor 4 from Streptococcus gordonii (strain Challis / ATCC 35105 / BCRC 15272 / CH1 / DL1 / V288).